The sequence spans 689 residues: uncharacterized protein (689 aa).

Ser-566 is a binding site for substrate. The active-site Proton acceptor is Tyr-579.

This sequence belongs to the short-chain dehydrogenases/reductases (SDR) family.

This is an uncharacterized protein from Bacillus subtilis (strain 168).